The sequence spans 560 residues: Serine palmitoyltransferase 2 (560 aa).

The helical transmembrane segment at 65–85 (PMLVAVLTYVGYGVLTLFGYL) threads the bilayer. At K377 the chain carries N6-(pyridoxal phosphate)lysine.

This sequence belongs to the class-II pyridoxal-phosphate-dependent aminotransferase family. Component of the serine palmitoyltransferase (SPT) complex, which is composed of SPTLC1, SPTLC2 or SPTLC3 and SPTSSA or SPTSSB. The heterodimer consisting of SPTLC1 and SPTLC2/SPTLC3 forms the catalytic core of the enzyme, while SPTSSA or SPTSSB subunits determine substrate specificity. SPT also interacts with ORMDL proteins, especially ORMDL3, which negatively regulate SPT activity in the presence of ceramides. Forms dimers of heterodimers with SPTLC1. It depends on pyridoxal 5'-phosphate as a cofactor.

The protein localises to the endoplasmic reticulum membrane. It carries out the reaction L-serine + hexadecanoyl-CoA + H(+) = 3-oxosphinganine + CO2 + CoA. The enzyme catalyses octadecanoyl-CoA + L-serine + H(+) = 3-oxoeicosasphinganine + CO2 + CoA. Its pathway is lipid metabolism; sphingolipid metabolism. With respect to regulation, SPT complex catalytic activity is negatively regulated by ORMDL proteins, including ORMDL3, in the presence of ceramides. This mechanism allows to maintain ceramide levels at sufficient concentrations for the production of complex sphingolipids, but which prevents the accumulation of ceramides to levels that trigger apoptosis. Functionally, component of the serine palmitoyltransferase multisubunit enzyme (SPT) that catalyzes the initial and rate-limiting step in sphingolipid biosynthesis by condensing L-serine and activated acyl-CoA (most commonly palmitoyl-CoA) to form long-chain bases. The SPT complex is composed of SPTLC1, SPTLC2 or SPTLC3 and SPTSSA or SPTSSB. Within this complex, the heterodimer consisting of SPTLC1 and SPTLC2/SPTLC3 forms the catalytic core. The composition of the serine palmitoyltransferase (SPT) complex determines the substrate preference. The SPTLC1-SPTLC2-SPTSSA complex shows a strong preference for C16-CoA substrate, while the SPTLC1-SPTLC3-SPTSSA isozyme uses both C14-CoA and C16-CoA as substrates, with a slight preference for C14-CoA. The SPTLC1-SPTLC2-SPTSSB complex shows a strong preference for C18-CoA substrate, while the SPTLC1-SPTLC3-SPTSSB isozyme displays an ability to use a broader range of acyl-CoAs, without apparent preference. Crucial for adipogenesis. This is Serine palmitoyltransferase 2 (SPTLC2) from Cricetulus griseus (Chinese hamster).